We begin with the raw amino-acid sequence, 460 residues long: MMGNQKLWGGRFEKGLEQWVEEFGASISFDYKLATFDIKASIAHVSMLGQQGIISKDEAELIKTGLEDIHRDILEEEIVFDSQDEDIHMTIERQLLAKIGPLAGKLHTARSRNDQVATDMHLYLKHILEALLEKLLQLRKVLVTLAEEHIETILPGYTHLQHAQPISFGHHLMAYYQMFTRDSERFKFNMKHTDMSPLGAAALAGTTFPIDRELTAQLLGFNELYHNSLDAVSDRDFIIEFLANASLLMMHMSRFCEEIILWTSYEYQFVSLSDSFSTGSSIMPQKKNPDMAELIRGKTGRVYGNLFSLLTVMKALPLAYNKDLQEDKEGLFDTAETILVAVDILAGMLSTMTVHKETMYRATQKDFSNATELADYLANKDMPFRQAHEIVGQLVLQASKEGIYLQDIPIKDFKAISPLIEEDIYDTLTSRAAVERRTSIGGTGFNQVSSQIALARKDLS.

It belongs to the lyase 1 family. Argininosuccinate lyase subfamily.

It is found in the cytoplasm. The catalysed reaction is 2-(N(omega)-L-arginino)succinate = fumarate + L-arginine. It functions in the pathway amino-acid biosynthesis; L-arginine biosynthesis; L-arginine from L-ornithine and carbamoyl phosphate: step 3/3. The sequence is that of Argininosuccinate lyase from Streptococcus uberis (strain ATCC BAA-854 / 0140J).